The following is a 623-amino-acid chain: Regulatory solute carrier protein family 1 member 1 (623 aa).

Composition is skewed to polar residues over residues 1-16 (MSSL…QAHP), 83-99 (CASS…PAIP), and 133-144 (EASLSVTTTRMQ). Disordered stretches follow at residues 1–48 (MSSL…PDSI), 71–99 (RKEQ…PAIP), 116–189 (SAEG…APHD), and 433–493 (EELT…PHCT). Basic and acidic residues-rich tracts occupy residues 150–159 (IGEKGWHPEY), 170–180 (QHEEPRNEQHE), and 460–473 (LVDK…RESV). Positions 474 to 491 (NESSLVTLDSAKTSNQPH) are enriched in polar residues. In terms of domain architecture, UBA spans 577 to 617 (IFPAADIDRILRAGFTLQEALGALHRVGGNADLALLVLLAK).

As to quaternary structure, interacts with YRDC. In terms of tissue distribution, renal outer cortex and outer medulla, small intestine and liver.

Its subcellular location is the cell membrane. The protein resides in the nucleus. It is found in the golgi apparatus. The protein localises to the trans-Golgi network. Mediates transcriptional and post-transcriptional regulation of SLC5A1. Inhibits a dynamin and PKC-dependent exocytotic pathway of SLC5A1. Also involved in transcriptional regulation of SLC22A2. Exhibits glucose-dependent, short-term inhibition of SLC5A1 and SLC22A2 by inhibiting the release of vesicles from the trans-Golgi network. The polypeptide is Regulatory solute carrier protein family 1 member 1 (RSC1A1) (Sus scrofa (Pig)).